A 127-amino-acid polypeptide reads, in one-letter code: Small ribosomal subunit protein bS6 (127 aa).

The tract at residues 104–127 is disordered; that stretch reads QGAEKGKSSRKEKVAAEAEASEEA. Basic and acidic residues predominate over residues 107-119; that stretch reads EKGKSSRKEKVAA.

The protein belongs to the bacterial ribosomal protein bS6 family.

Functionally, binds together with bS18 to 16S ribosomal RNA. This is Small ribosomal subunit protein bS6 from Coxiella burnetii (strain CbuG_Q212) (Coxiella burnetii (strain Q212)).